A 377-amino-acid chain; its full sequence is Succinyl-diaminopimelate desuccinylase (377 aa).

His-66 is a binding site for Zn(2+). Asp-68 is an active-site residue. Asp-99 is a Zn(2+) binding site. The active-site Proton acceptor is Glu-133. Residues Glu-134, Glu-162, and His-348 each contribute to the Zn(2+) site.

This sequence belongs to the peptidase M20A family. DapE subfamily. Homodimer. Requires Zn(2+) as cofactor. It depends on Co(2+) as a cofactor.

The enzyme catalyses N-succinyl-(2S,6S)-2,6-diaminopimelate + H2O = (2S,6S)-2,6-diaminopimelate + succinate. It participates in amino-acid biosynthesis; L-lysine biosynthesis via DAP pathway; LL-2,6-diaminopimelate from (S)-tetrahydrodipicolinate (succinylase route): step 3/3. Its function is as follows. Catalyzes the hydrolysis of N-succinyl-L,L-diaminopimelic acid (SDAP), forming succinate and LL-2,6-diaminopimelate (DAP), an intermediate involved in the bacterial biosynthesis of lysine and meso-diaminopimelic acid, an essential component of bacterial cell walls. The sequence is that of Succinyl-diaminopimelate desuccinylase from Bordetella avium (strain 197N).